The sequence spans 69 residues: Beta-defensin 1 (69 aa).

The N-terminal stretch at 1–21 is a signal peptide; it reads MKTHYFLLVMLFFLFSQMELG. Positions 22-32 are excised as a propeptide; sequence AGILTSLGRRT. 3 cysteine pairs are disulfide-bonded: C37–C66, C44–C59, and C49–C67.

Belongs to the beta-defensin family. As to quaternary structure, monomer. Homodimer. In terms of tissue distribution, highly expressed in kidney.

It localises to the secreted. Its subcellular location is the membrane. Its function is as follows. Has bactericidal activity. May act as a ligand for C-C chemokine receptor CCR6. Positively regulates the sperm motility and bactericidal activity in a CCR6-dependent manner. Binds to CCR6 and triggers Ca2+ mobilization in the sperm which is important for its motility. In Rattus norvegicus (Rat), this protein is Beta-defensin 1 (Defb1).